The primary structure comprises 479 residues: MSSPRNGYRDRLILAVDVGSSVLRCHLYNQSGEICGSAEDKLKVLYPQAGYVEIDPESLWEQFVRVVKEAVADAGIQMSQVAGLGISTQRGTFITWNKKTGETFHNFISWQDLRAADLVSSWNRSLLLKAVHGVCTALHFFTRRKRFLAASLINFTTQHVSLRLVWVLQNIPQVRQAAEKGNCCFGTIDTWLLHKLTKGTVFATDYSNASGTAVFDPYLMCWSSFLCSLLSIPLSIFPPVEDTSHSFGLADPTIFGAPVPILALVADQQAAMFGQCCFDVGSVKLTMGTGSFISINTGETLHTSIAGLYPLIGWKVGDEVVCLAEGNASDTGTAIKWAEELNLFTSVADTEAMARSVPDCGGIYLVPSFSGLQAPINDPYACASFMGLKPSTSKSHLVRAILESVAYRNKQLYDTVLRETTIPITLIRADGGVSNNNFIMQMTADLLGQTIDKPKHTDMSSLGAAFLAGMAVYGPLKTS.

ATP-binding residues include Ser-20 and Ser-21. Glycerol is bound by residues Arg-90, Asp-267, and Gln-268. ATP contacts are provided by Thr-289, Gly-332, and Gly-432.

Belongs to the FGGY kinase family.

The protein resides in the cytoplasm. The enzyme catalyses glycerol + ATP = sn-glycerol 3-phosphate + ADP + H(+). It participates in polyol metabolism; glycerol degradation via glycerol kinase pathway; sn-glycerol 3-phosphate from glycerol: step 1/1. Skin-specific kinase that plays a key role in glycerol metabolism, catalyzing its phosphorylation to produce sn-glycerol 3-phosphate. Involved in skin-specific regulation of sterol regulatory element-binding protein (SREBP) processing and lipid biosynthesis. The chain is Glycerol kinase 5 (gk5) from Xenopus laevis (African clawed frog).